A 224-amino-acid polypeptide reads, in one-letter code: ATP phosphoribosyltransferase (224 aa).

The protein belongs to the ATP phosphoribosyltransferase family. Short subfamily. As to quaternary structure, heteromultimer composed of HisG and HisZ subunits.

It localises to the cytoplasm. The catalysed reaction is 1-(5-phospho-beta-D-ribosyl)-ATP + diphosphate = 5-phospho-alpha-D-ribose 1-diphosphate + ATP. It participates in amino-acid biosynthesis; L-histidine biosynthesis; L-histidine from 5-phospho-alpha-D-ribose 1-diphosphate: step 1/9. Catalyzes the condensation of ATP and 5-phosphoribose 1-diphosphate to form N'-(5'-phosphoribosyl)-ATP (PR-ATP). Has a crucial role in the pathway because the rate of histidine biosynthesis seems to be controlled primarily by regulation of HisG enzymatic activity. This Cupriavidus necator (strain ATCC 17699 / DSM 428 / KCTC 22496 / NCIMB 10442 / H16 / Stanier 337) (Ralstonia eutropha) protein is ATP phosphoribosyltransferase.